Reading from the N-terminus, the 266-residue chain is Mitochondrial genome maintenance protein MGM101 (266 aa).

The N-terminal 23 residues, 1-23 (MLHSTKLVFRATPQALCFPVRSY), are a transit peptide targeting the mitochondrion. 2 stretches are compositionally biased toward polar residues: residues 37 to 47 (KTTSKLAPSIT) and 57 to 68 (PSLQEPQSATST). Residues 37–68 (KTTSKLAPSITTEDEVAEQDPSLQEPQSATST) form a disordered region.

Belongs to the MGM101 family. As to quaternary structure, forms homooligomers in vitro.

It localises to the mitochondrion matrix. The protein resides in the mitochondrion nucleoid. Functionally, plays a role in the replication of the mitochondrial genome and the maintenance of its telomeres. Able to catalyze strand annealing and D-loop formation. Binds a wide variety of DNA substrates. Exhibited the highest affinity for DNA molecules carrying 3' ssDNA overhangs (Y-form, 3' FLAP, 3' overhang) and for substrates with complex structures (X-O and Fork). Forms homogeneous ring-shaped structures at the ssDNA native telomeres ends. Oligomers seem to bind to the ssDNA as a filament until they reach the double-stranded region and induce the formation of bends and loops within the double-stranded part of the molecules. In Candida parapsilosis (strain CDC 317 / ATCC MYA-4646) (Yeast), this protein is Mitochondrial genome maintenance protein MGM101.